The following is a 470-amino-acid chain: Dihydrolipoyl dehydrogenase (470 aa).

FAD is bound by residues 39–47, Lys-56, and Ala-119; that span reads EKATLGGVC. A disulfide bond links Cys-47 and Cys-52. Residues 183 to 187, Glu-206, and 272 to 275 each bind NAD(+); these read GGGYI and TVGR. Residues Asp-315 and Ala-323 each coordinate FAD. The active-site Proton acceptor is His-447.

This sequence belongs to the class-I pyridine nucleotide-disulfide oxidoreductase family. Homodimer. Component of two multienzyme complexes: pyruvate dehydrogenase complex and oxoglutarate dehydrogenase complex. Requires FAD as cofactor.

Its subcellular location is the cytoplasm. It carries out the reaction N(6)-[(R)-dihydrolipoyl]-L-lysyl-[protein] + NAD(+) = N(6)-[(R)-lipoyl]-L-lysyl-[protein] + NADH + H(+). In terms of biological role, catalyzes the oxidation of dihydrolipoamide to lipoamide. The polypeptide is Dihydrolipoyl dehydrogenase (pdhD) (Bacillus subtilis (strain 168)).